The primary structure comprises 357 residues: MAHDFSGLLNPSLLKMSAYSVEGGQQAEIKLNQNESPFDLPLWLKDEIMDEFKHEAWNRYPDILPFRGMKAYADFLGIAPESVMMSNGSNEMLYTIFLACLSKGRKVVIPEPSFSLYEKLAVLLQADIVDVPMHDDLTFDVDAIIARTNQERAGFVVLSTPNNPTSQSLRLDDVRRIVSGVEALVLVDEAYVEFSREESALTLIDEFPNLIILRTMSKALALAGMRIGFAITNPQLLSEIAKPKIPFTSGRLAEITLQHVLRHYSLVDDAVAYILRERNRLLGELSSVSAIHTFPSDANFIIIRVDDARHVFHALQDEGILVRNVSGYRLMENCLRFNIGLETENDLLLEKLHRMKG.

Lysine 218 is subject to N6-(pyridoxal phosphate)lysine.

It belongs to the class-II pyridoxal-phosphate-dependent aminotransferase family. Histidinol-phosphate aminotransferase subfamily. Homodimer. Pyridoxal 5'-phosphate serves as cofactor.

It catalyses the reaction L-histidinol phosphate + 2-oxoglutarate = 3-(imidazol-4-yl)-2-oxopropyl phosphate + L-glutamate. It functions in the pathway amino-acid biosynthesis; L-histidine biosynthesis; L-histidine from 5-phospho-alpha-D-ribose 1-diphosphate: step 7/9. The chain is Histidinol-phosphate aminotransferase from Prosthecochloris aestuarii (strain DSM 271 / SK 413).